Here is a 144-residue protein sequence, read N- to C-terminus: Small ribosomal subunit protein eS17 (144 aa).

It belongs to the eukaryotic ribosomal protein eS17 family.

This Solanum lycopersicum (Tomato) protein is Small ribosomal subunit protein eS17 (RPS17).